The following is a 123-amino-acid chain: Urotensin-2 (123 aa).

The signal sequence occupies residues 1-20 (MDRVPFCCLLFVGLLNPLLS). Residues 21–104 (FPVTDTGEMS…TVLSRLLART (84 aa)) constitute a propeptide that is removed on maturation. A disordered region spans residues 63–91 (EAEGSLGQADPSAETPTPRGSLRKALTGQ). Cys117 and Cys122 are disulfide-bonded.

This sequence belongs to the urotensin-2 family. As to expression, brain specific.

The protein localises to the secreted. Functionally, highly potent vasoconstrictor. The sequence is that of Urotensin-2 (Uts2) from Rattus norvegicus (Rat).